Here is a 379-residue protein sequence, read N- to C-terminus: ATP-sensitive inward rectifier potassium channel 10 (379 aa).

The Cytoplasmic portion of the chain corresponds to 1 to 61 (MTSVAKVYYS…LKDLWTTFID (61 aa)). 1,2-dioctanoyl-sn-glycero-3-phospho-(1D-myo-inositol-4,5-bisphosphate) is bound at residue Arg-36. The chain crosses the membrane as a helical span at residues 62 to 88 (MQWRYKLLLFSATFAGTWFLFGVVWYL). The Extracellular portion of the chain corresponds to 89–114 (VAVAHGDLLELDPPANHTPCVVQVHT). Cys-108 and Cys-140 are joined by a disulfide. The discontinuously helical; Pore-forming intramembrane region spans 115 to 131 (LTGAFLFSLESQTTIGY). Residues 128–133 (TIGYGF) carry the Selectivity filter motif. The Extracellular portion of the chain corresponds to 132 to 140 (GFRYISEEC). Residues 141 to 166 (PLAIVLLIAQLVLTTILEIFITGTFL) traverse the membrane as a helical segment. Residues 167–379 (AKIARPKKRA…SALSVRISNV (213 aa)) are Cytoplasmic-facing. Lys-168, Arg-171, and Lys-173 together coordinate 1,2-dioctanoyl-sn-glycero-3-phospho-(1D-myo-inositol-4,5-bisphosphate). 210-217 (GCQVTGKL) serves as a coordination point for ATP.

The protein belongs to the inward rectifier-type potassium channel (TC 1.A.2.1) family. KCNJ10 subfamily. As to quaternary structure, homotetramer. In kidney cells, it forms heteromeric channels with Kir5.1/KCNJ16; this interaction is required for KCNJ16 localization to the basolateral membrane. Interacts with MAGI1, alone and possibly as a heteromer with KCNJ16; this interaction may facilitate KCNJ10/KCNJ16 potassium channel expression at the basolateral membrane in kidney cells. Interacts with PATJ. Expressed in kidney (at protein level). In the nephron, expressed in the distal convoluted tubule, the connecting tubule, the collecting duct and cortical thick ascending limbs.

The protein resides in the membrane. It is found in the basolateral cell membrane. It catalyses the reaction K(+)(in) = K(+)(out). With respect to regulation, channel activity is strongly regulated by variations of cytosolic pH; channels are activated by alkaline and inhibited by acidic pH values. Inhibited by Ba(2+) and Cs(+). Activated by phosphatidylinositol 4,5 biphosphate (PtdIns(4,5)P2). Functionally, may be responsible for potassium buffering action of glial cells in the brain. Inward rectifier potassium channels are characterized by a greater tendency to allow potassium to flow into the cell rather than out of it. Their voltage dependence is regulated by the concentration of extracellular potassium; as external potassium is raised, the voltage range of the channel opening shifts to more positive voltages. The inward rectification is mainly due to the blockage of outward current by internal magnesium. Can be blocked by extracellular barium and cesium. In the kidney, together with KCNJ16, mediates basolateral K(+) recycling in distal tubules; this process is critical for Na(+) reabsorption at the tubules. The protein is ATP-sensitive inward rectifier potassium channel 10 of Homo sapiens (Human).